The following is a 953-amino-acid chain: Coiled-coil domain-containing protein 14 (953 aa).

The span at 1–21 (MKRGIRRDPFRKRKLGGRAKK) shows a compositional bias: basic residues. 2 disordered regions span residues 1–22 (MKRGIRRDPFRKRKLGGRAKKV) and 52–72 (SGARPGQVLSSGRHTGPAKLT). Serine 124 is subject to Phosphoserine. Disordered stretches follow at residues 126-189 (SETA…TSDL) and 268-287 (PPCPPKVHSEVQTDGNSQFA). The span at 145 to 154 (YGSKKKRHEK) shows a compositional bias: basic residues. A compositionally biased stretch (basic and acidic residues) spans 169–187 (DNKKQIPNEASARSERDTS). Over residues 277-287 (EVQTDGNSQFA) the composition is skewed to polar residues. Coiled-coil stretches lie at residues 383–413 (LATNEEKCAREQIREATSERKDLNIHVRDTK) and 483–618 (AMQP…AEKE). Serine 670, serine 754, and serine 798 each carry phosphoserine.

As to quaternary structure, interacts with CEP63.

Its subcellular location is the cytoplasm. The protein localises to the cytoskeleton. The protein resides in the microtubule organizing center. It is found in the centrosome. It localises to the centriolar satellite. Negatively regulates centriole duplication. Negatively regulates CEP63 and CDK2 centrosomal localization. The protein is Coiled-coil domain-containing protein 14 (CCDC14) of Homo sapiens (Human).